Consider the following 190-residue polypeptide: Protein GrpE (190 aa).

Residues 1–31 (MTETPNTSSEEIQTSEPSSDNELQTLQQENA) are compositionally biased toward polar residues. Residues 1–34 (MTETPNTSSEEIQTSEPSSDNELQTLQQENANLK) are disordered.

Belongs to the GrpE family. As to quaternary structure, homodimer.

Its subcellular location is the cytoplasm. In terms of biological role, participates actively in the response to hyperosmotic and heat shock by preventing the aggregation of stress-denatured proteins, in association with DnaK and GrpE. It is the nucleotide exchange factor for DnaK and may function as a thermosensor. Unfolded proteins bind initially to DnaJ; upon interaction with the DnaJ-bound protein, DnaK hydrolyzes its bound ATP, resulting in the formation of a stable complex. GrpE releases ADP from DnaK; ATP binding to DnaK triggers the release of the substrate protein, thus completing the reaction cycle. Several rounds of ATP-dependent interactions between DnaJ, DnaK and GrpE are required for fully efficient folding. The chain is Protein GrpE from Chlamydia muridarum (strain MoPn / Nigg).